The chain runs to 194 residues: Leucyl/phenylalanyl-tRNA--protein transferase (194 aa).

The protein belongs to the L/F-transferase family.

It localises to the cytoplasm. It carries out the reaction N-terminal L-lysyl-[protein] + L-leucyl-tRNA(Leu) = N-terminal L-leucyl-L-lysyl-[protein] + tRNA(Leu) + H(+). The enzyme catalyses N-terminal L-arginyl-[protein] + L-leucyl-tRNA(Leu) = N-terminal L-leucyl-L-arginyl-[protein] + tRNA(Leu) + H(+). The catalysed reaction is L-phenylalanyl-tRNA(Phe) + an N-terminal L-alpha-aminoacyl-[protein] = an N-terminal L-phenylalanyl-L-alpha-aminoacyl-[protein] + tRNA(Phe). In terms of biological role, functions in the N-end rule pathway of protein degradation where it conjugates Leu, Phe and, less efficiently, Met from aminoacyl-tRNAs to the N-termini of proteins containing an N-terminal arginine or lysine. The chain is Leucyl/phenylalanyl-tRNA--protein transferase from Pelodictyon phaeoclathratiforme (strain DSM 5477 / BU-1).